The primary structure comprises 397 residues: Ribosomal RNA large subunit methyltransferase I (397 aa).

In terms of domain architecture, PUA spans 2 to 80 (SAAIYLVKGR…QDINRAFFVK (79 aa)).

This sequence belongs to the methyltransferase superfamily. RlmI family.

It is found in the cytoplasm. The catalysed reaction is cytidine(1962) in 23S rRNA + S-adenosyl-L-methionine = 5-methylcytidine(1962) in 23S rRNA + S-adenosyl-L-homocysteine + H(+). In terms of biological role, specifically methylates the cytosine at position 1962 (m5C1962) of 23S rRNA. The sequence is that of Ribosomal RNA large subunit methyltransferase I from Vibrio vulnificus (strain CMCP6).